The following is a 168-amino-acid chain: Sperm acrosome-associated protein 9 (168 aa).

As to quaternary structure, microtubule inner protein component of sperm flagellar doublet microtubules. Interacts with CABP1 and CALR. Interacts with INCA1. Interacts with microtubules. In terms of tissue distribution, expressed in sperm (at protein level). Expressed from almost all the cell types of testis, with abundant expression in round and elongated spermatids (at protein level). Predominantly expressed in tissues containing motile cilia.

It localises to the cytoplasm. The protein resides in the cytoplasmic vesicle. Its subcellular location is the secretory vesicle. The protein localises to the acrosome. It is found in the cytoskeleton. It localises to the cilium basal body. The protein resides in the flagellum axoneme. Its subcellular location is the cilium axoneme. The protein localises to the nucleus. Microtubule inner protein (MIP) part of the dynein-decorated doublet microtubules (DMTs) of multiciliated respiratory cells and the distal singlet microtubules of monoflagellated spermatozoa. Forms an extensive interaction network cross-linking the lumen of axonemal doublet microtubules. The sequence is that of Sperm acrosome-associated protein 9 from Mus musculus (Mouse).